We begin with the raw amino-acid sequence, 241 residues long: Pyridoxal phosphate phosphatase PHOSPHO2 (241 aa).

Catalysis depends on Asp-8, which acts as the Nucleophile. 2 residues coordinate Mg(2+): Asp-8 and Asp-10. The Proton donor role is filled by Asp-10. Asp-19 and Asp-99 together coordinate substrate. Asp-179 lines the Mg(2+) pocket.

It belongs to the HAD-like hydrolase superfamily. PHOSPHO family. Requires Mg(2+) as cofactor.

It carries out the reaction pyridoxal 5'-phosphate + H2O = pyridoxal + phosphate. Phosphatase that has high activity toward pyridoxal 5'-phosphate (PLP). Also active at much lower level toward pyrophosphate, phosphoethanolamine (PEA), phosphocholine (PCho), phospho-l-tyrosine, fructose-6-phosphate, p-nitrophenyl phosphate, and h-glycerophosphate. The polypeptide is Pyridoxal phosphate phosphatase PHOSPHO2 (PHOSPHO2) (Homo sapiens (Human)).